Reading from the N-terminus, the 112-residue chain is MTELAQMKCEACQADAPKVSDAELGELVRMIPDWTVEVRDGIMQLERVYKFKNFKLAMAFTNKLADLAEADFHHPGILTEWGKVTVTWWSHSIKGLHKNDFIMAAKTDTLLD.

Belongs to the pterin-4-alpha-carbinolamine dehydratase family.

The catalysed reaction is (4aS,6R)-4a-hydroxy-L-erythro-5,6,7,8-tetrahydrobiopterin = (6R)-L-erythro-6,7-dihydrobiopterin + H2O. The sequence is that of Putative pterin-4-alpha-carbinolamine dehydratase from Shewanella piezotolerans (strain WP3 / JCM 13877).